The chain runs to 294 residues: Cytidine deaminase (294 aa).

CMP/dCMP-type deaminase domains lie at 48 to 168 and 186 to 294; these read DEDA…FGPK and LTGD…VLLA. 89 to 91 is a substrate binding site; the sequence is NME. Position 102 (histidine 102) interacts with Zn(2+). The Proton donor role is filled by glutamate 104. Zn(2+) is bound by residues cysteine 129 and cysteine 132.

Belongs to the cytidine and deoxycytidylate deaminase family. Homodimer. Requires Zn(2+) as cofactor.

The catalysed reaction is cytidine + H2O + H(+) = uridine + NH4(+). The enzyme catalyses 2'-deoxycytidine + H2O + H(+) = 2'-deoxyuridine + NH4(+). In terms of biological role, this enzyme scavenges exogenous and endogenous cytidine and 2'-deoxycytidine for UMP synthesis. The protein is Cytidine deaminase of Escherichia coli O7:K1 (strain IAI39 / ExPEC).